Here is a 70-residue protein sequence, read N- to C-terminus: Dermaseptin-H3 (70 aa).

An N-terminal signal peptide occupies residues 1–22 (MAFLKKSLFLVLFLGMVSLSIC). Residues 23–43 (EEEKRENEDEELQEDDEQSEM) constitute a propeptide that is removed on maturation. The disordered stretch occupies residues 25-44 (EKRENEDEELQEDDEQSEMK). Residues 30–40 (EDEELQEDDEQ) show a composition bias toward acidic residues. Leu70 carries the post-translational modification Leucine amide.

As to expression, expressed by the skin glands.

It is found in the secreted. Its function is as follows. Has antibacterial activity against the Gram-negative bacteria E.coli and P.aeruginosa, and the Gram-positive bacteria S.aureus and M.luteus. Has antiprotozoal activity against L.amazonensis. No hemolytic activity. The chain is Dermaseptin-H3 from Pithecopus hypochondrialis (Orange-legged leaf frog).